The sequence spans 1873 residues: SAGA complex subunit Spt20 (1873 aa).

It belongs to the SPT20 family. Component of the Spt-Ada-Gcn5 acetyltransferase (SAGA) complex consisting of wda/Taf5L, Saf6, Taf9, Taf10b, Taf12, Ada1, Spt3, Spt7, Spt20, Sf3b3, Sf3b5, Nipped-A/Tra1, a histone acetyltransferase (HAT) module made up of Gcn5, Ada2b (Isoform B), Ada3 and Sgf29, and a deubiquitinase (DUB) module made up of not/nonstop, Sgf11 and e(y)2 tethered to SAGA by Atxn7.

Its subcellular location is the nucleus. Its function is as follows. Component of the transcription regulatory complex SAGA, a multiprotein complex that activates transcription by remodeling chromatin and mediating histone acetylation and deubiquitination. The SAGA complex predominantly acetylates histone H3. This chain is SAGA complex subunit Spt20, found in Drosophila melanogaster (Fruit fly).